A 1295-amino-acid polypeptide reads, in one-letter code: Phosphoribosylformylglycinamidine synthase (1295 aa).

The interval Trp305–Lys327 is disordered. Residues Gly307–Asp318, Thr386–Tyr388, and Ala678 each bind ATP. Asp679, Glu718, Asn722, and Asp884 together coordinate Mg(2+). ATP is bound at residue Ser886. Residues Val1042–Gly1295 form the Glutamine amidotransferase type-1 domain. The active-site Nucleophile is the Cys1135. Active-site residues include His1260 and Glu1262.

It in the N-terminal section; belongs to the FGAMS family. As to quaternary structure, monomer.

The protein resides in the cytoplasm. It catalyses the reaction N(2)-formyl-N(1)-(5-phospho-beta-D-ribosyl)glycinamide + L-glutamine + ATP + H2O = 2-formamido-N(1)-(5-O-phospho-beta-D-ribosyl)acetamidine + L-glutamate + ADP + phosphate + H(+). Its pathway is purine metabolism; IMP biosynthesis via de novo pathway; 5-amino-1-(5-phospho-D-ribosyl)imidazole from N(2)-formyl-N(1)-(5-phospho-D-ribosyl)glycinamide: step 1/2. Phosphoribosylformylglycinamidine synthase involved in the purines biosynthetic pathway. Catalyzes the ATP-dependent conversion of formylglycinamide ribonucleotide (FGAR) and glutamine to yield formylglycinamidine ribonucleotide (FGAM) and glutamate. The polypeptide is Phosphoribosylformylglycinamidine synthase (Salmonella paratyphi A (strain ATCC 9150 / SARB42)).